A 488-amino-acid polypeptide reads, in one-letter code: 3-octaprenyl-4-hydroxybenzoate carboxy-lyase (488 aa).

Asn172 serves as a coordination point for Mn(2+). Residues 175–177 (IYR), 189–191 (RWL), and 194–195 (RG) contribute to the prenylated FMN site. Residue Glu238 coordinates Mn(2+). Asp287 functions as the Proton donor in the catalytic mechanism.

This sequence belongs to the UbiD family. As to quaternary structure, homohexamer. Prenylated FMN is required as a cofactor. The cofactor is Mn(2+).

It is found in the cell membrane. The catalysed reaction is a 4-hydroxy-3-(all-trans-polyprenyl)benzoate + H(+) = a 2-(all-trans-polyprenyl)phenol + CO2. It participates in cofactor biosynthesis; ubiquinone biosynthesis. Functionally, catalyzes the decarboxylation of 3-octaprenyl-4-hydroxy benzoate to 2-octaprenylphenol, an intermediate step in ubiquinone biosynthesis. The polypeptide is 3-octaprenyl-4-hydroxybenzoate carboxy-lyase (Ectopseudomonas mendocina (strain ymp) (Pseudomonas mendocina)).